We begin with the raw amino-acid sequence, 275 residues long: MANYTAADVKRLRELTGSGMMACKNALAEAEGDFDKAVEQLRIKGAKDVGKRAERTTAEGLVVSKDGVLLELDCETDFVAKNEDFLKLAESIVTVAAAAKPADVDALKALELDGKTVDTVIQEQSAKIGEKLVLSKIASFDGPVAVYLHKRSADLPPAVGVLVEYTGEGDAAAEAARGAAMQVAALKAKYVTRDEVPEDIVANERHIAEETARAEGKPEQALPKIIEGRVNGYFKDVVLTEQSSVQDSKKSVKAILDEAGVTIKRFVRFEVGASS.

The segment at 76-79 (TDFV) is involved in Mg(2+) ion dislocation from EF-Tu.

Belongs to the EF-Ts family.

It localises to the cytoplasm. Functionally, associates with the EF-Tu.GDP complex and induces the exchange of GDP to GTP. It remains bound to the aminoacyl-tRNA.EF-Tu.GTP complex up to the GTP hydrolysis stage on the ribosome. The sequence is that of Elongation factor Ts from Rhodococcus opacus (strain B4).